The chain runs to 307 residues: UDP-3-O-acyl-N-acetylglucosamine deacetylase (307 aa).

Zn(2+) contacts are provided by His-78, His-241, and Asp-245. Residue His-268 is the Proton donor of the active site.

The protein belongs to the LpxC family. Zn(2+) is required as a cofactor.

It catalyses the reaction a UDP-3-O-[(3R)-3-hydroxyacyl]-N-acetyl-alpha-D-glucosamine + H2O = a UDP-3-O-[(3R)-3-hydroxyacyl]-alpha-D-glucosamine + acetate. The protein operates within glycolipid biosynthesis; lipid IV(A) biosynthesis; lipid IV(A) from (3R)-3-hydroxytetradecanoyl-[acyl-carrier-protein] and UDP-N-acetyl-alpha-D-glucosamine: step 2/6. Functionally, catalyzes the hydrolysis of UDP-3-O-myristoyl-N-acetylglucosamine to form UDP-3-O-myristoylglucosamine and acetate, the committed step in lipid A biosynthesis. This is UDP-3-O-acyl-N-acetylglucosamine deacetylase from Polaromonas sp. (strain JS666 / ATCC BAA-500).